Reading from the N-terminus, the 269-residue chain is Pertussis toxin subunit 1 homolog (269 aa).

The N-terminal stretch at Met1 to Ala34 is a signal peptide.

Belongs to the bacterial exotoxin subunit A family.

In Bordetella parapertussis (strain 12822 / ATCC BAA-587 / NCTC 13253), this protein is Pertussis toxin subunit 1 homolog (ptxA).